The primary structure comprises 208 residues: Thymidylate kinase (208 aa).

Gly10–Thr17 is a binding site for ATP.

Belongs to the thymidylate kinase family.

The enzyme catalyses dTMP + ATP = dTDP + ADP. In terms of biological role, phosphorylation of dTMP to form dTDP in both de novo and salvage pathways of dTTP synthesis. This chain is Thymidylate kinase, found in Ligilactobacillus salivarius (strain UCC118) (Lactobacillus salivarius).